Reading from the N-terminus, the 132-residue chain is Small ribosomal subunit protein uS8c (132 aa).

The protein belongs to the universal ribosomal protein uS8 family. In terms of assembly, part of the 30S ribosomal subunit.

The protein localises to the plastid. It is found in the chloroplast. Its function is as follows. One of the primary rRNA binding proteins, it binds directly to 16S rRNA central domain where it helps coordinate assembly of the platform of the 30S subunit. This chain is Small ribosomal subunit protein uS8c (rps8), found in Dioscorea elephantipes (Elephant's foot yam).